A 72-amino-acid chain; its full sequence is MFVTSKKMTAAVLAITLAMSLSACSNWSKRDRNTAIGAGAGALGGAVLTDGSTLGTLGGAAVGGVIGHQVGK.

The N-terminal stretch at 1–23 (MFVTSKKMTAAVLAITLAMSLSA) is a signal peptide. Residue Cys24 is the site of N-palmitoyl cysteine attachment. Residue Cys24 is the site of S-diacylglycerol cysteine attachment.

It is found in the cell membrane. Functionally, provides resistance to osmotic stress. May be important for stationary-phase survival. This is Osmotically-inducible lipoprotein B (osmB) from Escherichia coli O157:H7.